Reading from the N-terminus, the 297-residue chain is Protoheme IX farnesyltransferase (297 aa).

The next 9 membrane-spanning stretches (helical) occupy residues 26-46, 48-68, 96-116, 120-140, 147-167, 174-194, 218-238, 243-263, and 276-296; these read VTQLAVFCAVIGMFLATPGMV, YPVLFGGIAGIWLLAGAAFAV, FHIIIFSIILGSLGMIILWNF, LTMWLTLATFVGYAVIYTWLL, NIVIGGLSGAMPPALGWAAVT, AWLLVLIIFVWTPPHFWALAL, LLNILLYTLILIAATLLPYIY, IIYLISAIVLGLMFLAYVIAL, and FRFSITYLSLLFAALLIDHYF.

This sequence belongs to the UbiA prenyltransferase family. Protoheme IX farnesyltransferase subfamily.

The protein resides in the cell membrane. It carries out the reaction heme b + (2E,6E)-farnesyl diphosphate + H2O = Fe(II)-heme o + diphosphate. Its pathway is porphyrin-containing compound metabolism; heme O biosynthesis; heme O from protoheme: step 1/1. In terms of biological role, converts heme B (protoheme IX) to heme O by substitution of the vinyl group on carbon 2 of heme B porphyrin ring with a hydroxyethyl farnesyl side group. The sequence is that of Protoheme IX farnesyltransferase from Polynucleobacter asymbioticus (strain DSM 18221 / CIP 109841 / QLW-P1DMWA-1) (Polynucleobacter necessarius subsp. asymbioticus).